The chain runs to 404 residues: MSRRSSRLQAKQHAQPNQPDSPQETQIIQAKKRKTAQDVKKRKEEITKKHQYEIRNCWPPVLSGGISPCIIIETPHKEIGTSDFSRFTNYRFKNLFINPSPLPDLSWACSQEVWQNMLQKENRYVHDKHFQVLHSDLEPQMRSILLDWLLEVCEVYTLHRETFYLAQDFFDRFMLTQKDVNKNMLQLIGITSLFIASKLEEIYAPKLQEFAYVTDGACSEVDILKMELNILKALKWELCPVTVISWLNLFLQVDAVKDVPKVLLPQYSQETFIQIAQLLDLCILAIDSLEFQYRILAAAALCHFTSIEVVKKASGLEWDDISECVDWMVPFVSVVKSVSPVKLKTFKKIPMEDRHNIQTHTNYLALLNEVNYVNIYRKGGQLSPVCNGGIMTPPKSTEKPPGKH.

Residues 1 to 41 form a disordered region; it reads MSRRSSRLQAKQHAQPNQPDSPQETQIIQAKKRKTAQDVKK. Over residues 7 to 28 the composition is skewed to polar residues; it reads RLQAKQHAQPNQPDSPQETQII. Residue Ser21 is modified to Phosphoserine. Residue Lys348 is modified to N6-lactoyllysine. Ser383 bears the Phosphoserine mark. Residue Thr392 is modified to Phosphothreonine.

The protein belongs to the cyclin family. Cyclin E subfamily. Interacts with the CDK2 (in vivo) and CDK3 (in vitro) protein kinases to form a serine/threonine kinase holoenzyme complex. The cyclin subunit imparts substrate specificity to the complex. Post-translationally, phosphorylation by CDK2 triggers its release from CDK2 and degradation via the ubiquitin proteasome pathway. Lactylated at Lys-348. Delactylated by SIRT3. As to expression, highest levels in adult testis, thymus and brain. Lower levels in placenta, spleen and colon.

Its subcellular location is the nucleus. In terms of biological role, essential for the control of the cell cycle at the late G1 and early S phase. The protein is G1/S-specific cyclin-E2 (Ccne2) of Mus musculus (Mouse).